Reading from the N-terminus, the 547-residue chain is Delta-guaiene synthase 1 (547 aa).

The Mg(2+) site is built by aspartate 299, aspartate 303, and aspartate 444. Residues 299–303 carry the DDXXD motif motif; sequence DDTYD.

The protein belongs to the terpene synthase family. The cofactor is Mg(2+).

It catalyses the reaction (2E,6E)-farnesyl diphosphate = delta-guaiene + diphosphate. It carries out the reaction (2E,6E)-farnesyl diphosphate = alpha-guaiene + diphosphate. It participates in secondary metabolite biosynthesis; terpenoid biosynthesis. Sesquiterpene synthase involved in the biosynthesis of delta-guaiene (81.2%) and alpha-guaiene (18.1%), two structures composed of five- and seven-membered rings. Also produces 0.7% of alpha-humulene. The chain is Delta-guaiene synthase 1 (C2) from Aquilaria crassna (Eagle wood).